The sequence spans 102 residues: Large ribosomal subunit protein uL23 (102 aa).

This sequence belongs to the universal ribosomal protein uL23 family. In terms of assembly, part of the 50S ribosomal subunit. Contacts protein L29, and trigger factor when it is bound to the ribosome.

In terms of biological role, one of the early assembly proteins it binds 23S rRNA. One of the proteins that surrounds the polypeptide exit tunnel on the outside of the ribosome. Forms the main docking site for trigger factor binding to the ribosome. This is Large ribosomal subunit protein uL23 from Cutibacterium acnes (strain DSM 16379 / KPA171202) (Propionibacterium acnes).